The sequence spans 117 residues: B-box domain protein 30 (117 aa).

The segment at 27 to 73 (KAPVSCELCGENATVYCEADAAFLCRKCDRWVHSANFLARRHLRRVI) adopts a B box-type; atypical zinc-finger fold. Zn(2+) is bound by residues cysteine 32, cysteine 35, cysteine 54, and histidine 59. The PFVFL signature appears at 113–117 (PFVFL).

Interacts with CO (via B-box) and with TPL (via PFVFL motif). In terms of tissue distribution, highly expressed in shoot apical meristems and in vascular tissues of leaves. Also detected in petioles.

Its subcellular location is the nucleus. Its function is as follows. Developmental regulator acting by forming heterodimeric complexes, that sequester CO and CO-like (COL) proteins into non-functional complexes. Engages CO and the transcriptional repressor TPL in a tripartite complex. Involved in the CO-mediated long-day flowering-promotion pathway. The chain is B-box domain protein 30 from Arabidopsis thaliana (Mouse-ear cress).